Reading from the N-terminus, the 181-residue chain is Crossover junction endodeoxyribonuclease RuvC (181 aa).

Residues aspartate 8, glutamate 67, and aspartate 139 contribute to the active site. Mg(2+)-binding residues include aspartate 8, glutamate 67, and aspartate 139.

This sequence belongs to the RuvC family. Homodimer which binds Holliday junction (HJ) DNA. The HJ becomes 2-fold symmetrical on binding to RuvC with unstacked arms; it has a different conformation from HJ DNA in complex with RuvA. In the full resolvosome a probable DNA-RuvA(4)-RuvB(12)-RuvC(2) complex forms which resolves the HJ. Mg(2+) is required as a cofactor.

It is found in the cytoplasm. It carries out the reaction Endonucleolytic cleavage at a junction such as a reciprocal single-stranded crossover between two homologous DNA duplexes (Holliday junction).. The RuvA-RuvB-RuvC complex processes Holliday junction (HJ) DNA during genetic recombination and DNA repair. Endonuclease that resolves HJ intermediates. Cleaves cruciform DNA by making single-stranded nicks across the HJ at symmetrical positions within the homologous arms, yielding a 5'-phosphate and a 3'-hydroxyl group; requires a central core of homology in the junction. The consensus cleavage sequence is 5'-(A/T)TT(C/G)-3'. Cleavage occurs on the 3'-side of the TT dinucleotide at the point of strand exchange. HJ branch migration catalyzed by RuvA-RuvB allows RuvC to scan DNA until it finds its consensus sequence, where it cleaves and resolves the cruciform DNA. The polypeptide is Crossover junction endodeoxyribonuclease RuvC (Acinetobacter baumannii (strain SDF)).